The chain runs to 311 residues: Glycine--tRNA ligase alpha subunit (311 aa).

This sequence belongs to the class-II aminoacyl-tRNA synthetase family. As to quaternary structure, tetramer of two alpha and two beta subunits.

It localises to the cytoplasm. The enzyme catalyses tRNA(Gly) + glycine + ATP = glycyl-tRNA(Gly) + AMP + diphosphate. This Rhizobium meliloti (strain 1021) (Ensifer meliloti) protein is Glycine--tRNA ligase alpha subunit.